A 411-amino-acid chain; its full sequence is Glutamyl-tRNA reductase (411 aa).

Residues 49–52 (TCNR), Ser-99, 104–106 (ENE), and Gln-110 contribute to the substrate site. Residue Cys-50 is the Nucleophile of the active site. 179–184 (GAGEAG) contributes to the NADP(+) binding site.

Belongs to the glutamyl-tRNA reductase family. Homodimer.

It carries out the reaction (S)-4-amino-5-oxopentanoate + tRNA(Glu) + NADP(+) = L-glutamyl-tRNA(Glu) + NADPH + H(+). It functions in the pathway porphyrin-containing compound metabolism; protoporphyrin-IX biosynthesis; 5-aminolevulinate from L-glutamyl-tRNA(Glu): step 1/2. In terms of biological role, catalyzes the NADPH-dependent reduction of glutamyl-tRNA(Glu) to glutamate 1-semialdehyde (GSA). This Hyperthermus butylicus (strain DSM 5456 / JCM 9403 / PLM1-5) protein is Glutamyl-tRNA reductase.